Consider the following 250-residue polypeptide: Acetylglutamate kinase (250 aa).

Residues 41–42, R63, and N156 contribute to the substrate site; that span reads GG.

The protein belongs to the acetylglutamate kinase family. ArgB subfamily.

The protein localises to the cytoplasm. It catalyses the reaction N-acetyl-L-glutamate + ATP = N-acetyl-L-glutamyl 5-phosphate + ADP. The protein operates within amino-acid biosynthesis; L-arginine biosynthesis; N(2)-acetyl-L-ornithine from L-glutamate: step 2/4. Functionally, catalyzes the ATP-dependent phosphorylation of N-acetyl-L-glutamate. This chain is Acetylglutamate kinase, found in Listeria monocytogenes serotype 4b (strain CLIP80459).